The chain runs to 141 residues: Large ribosomal subunit protein uL11 (141 aa).

The protein belongs to the universal ribosomal protein uL11 family. In terms of assembly, part of the ribosomal stalk of the 50S ribosomal subunit. Interacts with L10 and the large rRNA to form the base of the stalk. L10 forms an elongated spine to which L12 dimers bind in a sequential fashion forming a multimeric L10(L12)X complex. Post-translationally, one or more lysine residues are methylated.

Functionally, forms part of the ribosomal stalk which helps the ribosome interact with GTP-bound translation factors. This chain is Large ribosomal subunit protein uL11, found in Geobacillus thermodenitrificans (strain NG80-2).